Reading from the N-terminus, the 419-residue chain is GTPase Obg (419 aa).

In terms of domain architecture, Obg spans 1-156 (MRFVDYVSIE…FYLDLQLKVM (156 aa)). Residues 157–334 (ADIGLVGKPN…LEEKQKKLEI (178 aa)) enclose the OBG-type G domain. GTP contacts are provided by residues 163 to 170 (GKPNAGKS), 188 to 192 (FTTLV), 209 to 212 (DLPG), 278 to 281 (NKCD), and 315 to 317 (NII). Residues serine 170 and threonine 190 each contribute to the Mg(2+) site. Residues 342-419 (IEFNLKAPFL…RIYEFEFHWN (78 aa)) form the OCT domain.

It belongs to the TRAFAC class OBG-HflX-like GTPase superfamily. OBG GTPase family. As to quaternary structure, monomer. It depends on Mg(2+) as a cofactor.

The protein resides in the cytoplasm. An essential GTPase which binds GTP, GDP and possibly (p)ppGpp with moderate affinity, with high nucleotide exchange rates and a fairly low GTP hydrolysis rate. Plays a role in control of the cell cycle, stress response, ribosome biogenesis and in those bacteria that undergo differentiation, in morphogenesis control. This is GTPase Obg from Mesomycoplasma hyopneumoniae (strain 232) (Mycoplasma hyopneumoniae).